We begin with the raw amino-acid sequence, 64 residues long: Large ribosomal subunit protein uL29 (64 aa).

It belongs to the universal ribosomal protein uL29 family.

The sequence is that of Large ribosomal subunit protein uL29 from Burkholderia ambifaria (strain MC40-6).